Reading from the N-terminus, the 278-residue chain is Protein FixR (278 aa).

Residue 40 to 64 (LLTGASRGIGHATAKLFSEAGWRII) coordinates NAD(+). Ser-175 is a substrate binding site. The Proton acceptor role is filled by Tyr-189.

This sequence belongs to the short-chain dehydrogenases/reductases (SDR) family.

This chain is Protein FixR (fixR), found in Bradyrhizobium diazoefficiens (strain JCM 10833 / BCRC 13528 / IAM 13628 / NBRC 14792 / USDA 110).